The following is a 274-amino-acid chain: tRNA-cytidine(32) 2-sulfurtransferase (274 aa).

The PP-loop motif signature appears at 40–45; it reads SGGKDS. C115, C118, and C206 together coordinate [4Fe-4S] cluster.

Belongs to the TtcA family. As to quaternary structure, homodimer. The cofactor is Mg(2+). It depends on [4Fe-4S] cluster as a cofactor.

The protein resides in the cytoplasm. It carries out the reaction cytidine(32) in tRNA + S-sulfanyl-L-cysteinyl-[cysteine desulfurase] + AH2 + ATP = 2-thiocytidine(32) in tRNA + L-cysteinyl-[cysteine desulfurase] + A + AMP + diphosphate + H(+). The protein operates within tRNA modification. Functionally, catalyzes the ATP-dependent 2-thiolation of cytidine in position 32 of tRNA, to form 2-thiocytidine (s(2)C32). The sulfur atoms are provided by the cysteine/cysteine desulfurase (IscS) system. The protein is tRNA-cytidine(32) 2-sulfurtransferase of Pseudomonas entomophila (strain L48).